Consider the following 3102-residue polypeptide: Laminin subunit alpha lam-3 (3102 aa).

Residues 1 to 16 (MRLWLGLLAVSNIALG) form the signal peptide. N-linked (GlcNAc...) asparagine glycosylation is found at N19, N135, and N237. One can recognise a Laminin N-terminal domain in the interval 44-295 (SERGLFPNIF…SISDISIGGQ (252 aa)). 16 cysteine pairs are disulfide-bonded: C296–C305, C298–C316, C318–C327, C330–C350, C353–C362, C355–C387, C390–C399, C402–C420, C423–C435, C425–C451, C453–C462, C465–C475, C478–C491, C480–C496, C498–C507, and C510–C525. Laminin EGF-like domains are found at residues 296–352 (CICY…VCQQ), 353–422 (CQCF…ACRT), 423–477 (CECD…TCEP), and 478–527 (CPCN…GCQP). Positions 548 to 740 (INNIGWHLTD…QDTLMGGVEV (193 aa)) constitute a Laminin IV type A 1 domain. Disulfide bonds link C774-C783, C776-C790, C793-C802, C805-C822, C825-C838, C827-C858, C861-C870, C873-C886, C889-C903, C891-C910, C913-C922, C925-C938, C941-C953, C943-C960, C962-C971, C974-C985, C988-C1000, C990-C1007, C1009-C1018, C1021-C1033, C1036-C1049, C1038-C1056, C1058-C1067, C1070-C1083, C1086-C1098, C1088-C1105, C1107-C1116, C1119-C1131, C1134-C1144, C1137-C1151, and C1153-C1162. Laminin EGF-like domains lie at 774–824 (CDCH…ACEQ), 825–888 (CECP…KCIE), 889–940 (CTCN…TCKP), 941–987 (CGCH…GCPA), 988–1035 (CDCN…GCQF), 1036–1085 (CHCN…GCED), 1086–1133 (CGCD…GCTE), 1134–1180 (CEPC…GCKL), 1181–1226 (CDCS…TCEP), and 1227–1283 (CGCN…GCTE). The N-linked (GlcNAc...) asparagine glycan is linked to N796. Residue N991 is glycosylated (N-linked (GlcNAc...) asparagine). A glycan (N-linked (GlcNAc...) asparagine) is linked at N1027. A glycan (N-linked (GlcNAc...) asparagine) is linked at N1076. N1164 is a glycosylation site (N-linked (GlcNAc...) asparagine). 9 disulfide bridges follow: C1165-C1178, C1181-C1193, C1183-C1200, C1202-C1211, C1214-C1224, C1227-C1246, C1229-C1252, C1254-C1263, and C1266-C1281. N-linked (GlcNAc...) asparagine glycosylation occurs at N1288. A Laminin IV type A 2 domain is found at 1295–1496 (QSDLVWQQMY…STTKAIGVEK (202 aa)). 12 disulfide bridges follow: C1540–C1549, C1542–C1556, C1559–C1568, C1571–C1587, C1590–C1603, C1592–C1614, C1617–C1626, C1629–C1644, C1647–C1659, C1649–C1666, C1668–C1677, and C1680–C1691. 3 consecutive Laminin EGF-like domains span residues 1540–1589 (CSCH…ACTK), 1590–1646 (CACP…TCSP), and 1647–1693 (CDCH…VCTS). N1717, N1734, N1777, N1806, N1839, N1875, N1969, N1984, and N2048 each carry an N-linked (GlcNAc...) asparagine glycan. Positions 2061 to 2084 (EAVSKMLGSEGSESGDANEESLRS) are disordered. N2091, N2193, N2369, and N2479 each carry an N-linked (GlcNAc...) asparagine glycan. Laminin G-like domains are found at residues 2467-2644 (SQRG…TDGC), 2652-2839 (DKII…IGMC), and 2913-3088 (RYGL…AKAC). C2617 and C2644 are joined by a disulfide. N-linked (GlcNAc...) asparagine glycans are attached at residues N2672 and N2686. Cysteines 2814 and 2839 form a disulfide. N2932, N2959, and N3007 each carry an N-linked (GlcNAc...) asparagine glycan. Cysteines 3058 and 3088 form a disulfide.

As to quaternary structure, laminin is a complex glycoprotein, consisting of three different polypeptide chains (alpha, beta, gamma), which are bound to each other by disulfide bonds into a cross-shaped molecule comprising one long and three short arms with globules at each end.

Its subcellular location is the secreted. The protein resides in the extracellular space. It is found in the extracellular matrix. It localises to the basement membrane. Functionally, binding to cells via a high affinity receptor, laminin is thought to mediate the attachment, migration and organization of cells into tissues during embryonic development by interacting with other extracellular matrix components. Required to assemble a stable basement membrane and for organizing receptor complexes and cytoskeletal components to the proper cell surfaces. During embryogenesis, does not require the presence of collagen type IV in order to associate with cell surfaces, prior to assembly of the prototypical basement membrane. Plays an important role in muscle contraction of the body. Probably plays a distinct role from the related laminin subunit alpha epi-1. This Caenorhabditis elegans protein is Laminin subunit alpha lam-3.